Reading from the N-terminus, the 156-residue chain is Ribosomal RNA large subunit methyltransferase H (156 aa).

Residues L73, G104, and 123 to 128 (VSSLTL) contribute to the S-adenosyl-L-methionine site.

The protein belongs to the RNA methyltransferase RlmH family. Homodimer.

It is found in the cytoplasm. The enzyme catalyses pseudouridine(1915) in 23S rRNA + S-adenosyl-L-methionine = N(3)-methylpseudouridine(1915) in 23S rRNA + S-adenosyl-L-homocysteine + H(+). In terms of biological role, specifically methylates the pseudouridine at position 1915 (m3Psi1915) in 23S rRNA. This Paraburkholderia phymatum (strain DSM 17167 / CIP 108236 / LMG 21445 / STM815) (Burkholderia phymatum) protein is Ribosomal RNA large subunit methyltransferase H.